The primary structure comprises 457 residues: Siroheme synthase (457 aa).

Residues 1–204 (MDHLPIFCQL…ADEKAVNATT (204 aa)) form a precorrin-2 dehydrogenase /sirohydrochlorin ferrochelatase region. NAD(+) contacts are provided by residues 22–23 (DV) and 43–44 (LT). Serine 128 is subject to Phosphoserine. Positions 216 to 457 (GEVVLVGAGP…RDKLNWFSNY (242 aa)) are uroporphyrinogen-III C-methyltransferase. S-adenosyl-L-methionine is bound at residue proline 225. The active-site Proton acceptor is aspartate 248. Lysine 270 acts as the Proton donor in catalysis. Residues 301 to 303 (GGD), isoleucine 306, 331 to 332 (TA), methionine 382, and glycine 411 each bind S-adenosyl-L-methionine.

This sequence in the N-terminal section; belongs to the precorrin-2 dehydrogenase / sirohydrochlorin ferrochelatase family. The protein in the C-terminal section; belongs to the precorrin methyltransferase family.

It carries out the reaction uroporphyrinogen III + 2 S-adenosyl-L-methionine = precorrin-2 + 2 S-adenosyl-L-homocysteine + H(+). It catalyses the reaction precorrin-2 + NAD(+) = sirohydrochlorin + NADH + 2 H(+). The catalysed reaction is siroheme + 2 H(+) = sirohydrochlorin + Fe(2+). The protein operates within cofactor biosynthesis; adenosylcobalamin biosynthesis; precorrin-2 from uroporphyrinogen III: step 1/1. It functions in the pathway cofactor biosynthesis; adenosylcobalamin biosynthesis; sirohydrochlorin from precorrin-2: step 1/1. Its pathway is porphyrin-containing compound metabolism; siroheme biosynthesis; precorrin-2 from uroporphyrinogen III: step 1/1. It participates in porphyrin-containing compound metabolism; siroheme biosynthesis; siroheme from sirohydrochlorin: step 1/1. The protein operates within porphyrin-containing compound metabolism; siroheme biosynthesis; sirohydrochlorin from precorrin-2: step 1/1. In terms of biological role, multifunctional enzyme that catalyzes the SAM-dependent methylations of uroporphyrinogen III at position C-2 and C-7 to form precorrin-2 via precorrin-1. Then it catalyzes the NAD-dependent ring dehydrogenation of precorrin-2 to yield sirohydrochlorin. Finally, it catalyzes the ferrochelation of sirohydrochlorin to yield siroheme. This is Siroheme synthase from Salmonella choleraesuis (strain SC-B67).